Here is a 369-residue protein sequence, read N- to C-terminus: uncharacterized protein (369 aa).

Helical transmembrane passes span 25 to 45, 47 to 67, 119 to 139, 152 to 172, 206 to 226, 235 to 255, 268 to 288, 295 to 315, and 323 to 343; these read QWVI…TVHW, FGLL…LMPE, LNIV…FGVM, ITGF…FSAL, GALH…LFAI, LQAV…TLHL, LLFT…LPLI, LVGF…TTVF, and WVFY…GTVF.

The protein to B.subtilis ComEC.

The protein localises to the cell membrane. This is an uncharacterized protein from Mycoplasma pneumoniae (strain ATCC 29342 / M129 / Subtype 1) (Mycoplasmoides pneumoniae).